A 752-amino-acid chain; its full sequence is Neuroendocrine convertase 1 (752 aa).

The first 27 residues, 1–27, serve as a signal peptide directing secretion; the sequence is MKQRGWTLQCTAFTLFCVWCALNSVKA. A propeptide spanning residues 28-110 is cleaved from the precursor; the sequence is KRQFVNEWAA…QQYEKERRKR (83 aa). The Peptidase S8 domain maps to 129–450; that stretch reads QWYLQDTRMT…FGLLNAKALV (322 aa). Residue Asp-167 is the Charge relay system of the active site. Residue Asn-173 is glycosylated (N-linked (GlcNAc...) asparagine). The Charge relay system role is filled by His-208. Cystine bridges form between Cys-225–Cys-374 and Cys-317–Cys-347. Ser-382 functions as the Charge relay system in the catalytic mechanism. N-linked (GlcNAc...) asparagine glycosylation is present at Asn-401. One can recognise a P/Homo B domain in the interval 460–597; that stretch reads NVPEKKECII…KLILHGTSSQ (138 aa). Residues Cys-467 and Cys-494 are joined by a disulfide bond. The tract at residues 631-662 is disordered; that stretch reads PTQNSLNGNLLVPKNSSSSSVEDRRDEQVQGA. Residue Asn-645 is glycosylated (N-linked (GlcNAc...) asparagine).

Belongs to the peptidase S8 family. Furin subfamily. Ca(2+) serves as cofactor.

It is found in the cytoplasmic vesicle. Its subcellular location is the secretory vesicle. It catalyses the reaction Release of protein hormones, neuropeptides and renin from their precursors, generally by hydrolysis of -Lys-Arg-|- bonds.. Its function is as follows. Involved in the processing of hormone and other protein precursors at sites comprised of pairs of basic amino acid residues. Substrates include POMC, renin, enkephalin, dynorphin, somatostatin, insulin and AGRP. The polypeptide is Neuroendocrine convertase 1 (Pcsk1) (Rattus norvegicus (Rat)).